Here is a 237-residue protein sequence, read N- to C-terminus: Sugar fermentation stimulation protein homolog (237 aa).

It belongs to the SfsA family.

This Pseudomonas putida (strain ATCC 700007 / DSM 6899 / JCM 31910 / BCRC 17059 / LMG 24140 / F1) protein is Sugar fermentation stimulation protein homolog.